The following is a 532-amino-acid chain: Bifunctional purine biosynthesis protein PurH (532 aa).

Positions 1–149 (MTDPAPLTRA…KNHGAVTVLT (149 aa)) constitute an MGS-like domain.

This sequence belongs to the PurH family.

The catalysed reaction is (6R)-10-formyltetrahydrofolate + 5-amino-1-(5-phospho-beta-D-ribosyl)imidazole-4-carboxamide = 5-formamido-1-(5-phospho-D-ribosyl)imidazole-4-carboxamide + (6S)-5,6,7,8-tetrahydrofolate. It carries out the reaction IMP + H2O = 5-formamido-1-(5-phospho-D-ribosyl)imidazole-4-carboxamide. Its pathway is purine metabolism; IMP biosynthesis via de novo pathway; 5-formamido-1-(5-phospho-D-ribosyl)imidazole-4-carboxamide from 5-amino-1-(5-phospho-D-ribosyl)imidazole-4-carboxamide (10-formyl THF route): step 1/1. The protein operates within purine metabolism; IMP biosynthesis via de novo pathway; IMP from 5-formamido-1-(5-phospho-D-ribosyl)imidazole-4-carboxamide: step 1/1. The chain is Bifunctional purine biosynthesis protein PurH from Jannaschia sp. (strain CCS1).